The following is a 172-amino-acid chain: MNRAEKREFVTWLNEAFRKSGSVIVAHYSGLTVSQMNDLRSKMSEAGGAIKVAKNRLAKIALQGTESESIVDLFSGQTLIAYSEDPITAPKVAVDFAKTNDKFVILGGSMGATSLSVDAVKSLASLPSLNELRAKLVGMISTPATRIAQVVNAPAGQVVRVIGAYAQEGKAA.

It belongs to the universal ribosomal protein uL10 family. In terms of assembly, part of the ribosomal stalk of the 50S ribosomal subunit. The N-terminus interacts with L11 and the large rRNA to form the base of the stalk. The C-terminus forms an elongated spine to which L12 dimers bind in a sequential fashion forming a multimeric L10(L12)X complex.

Forms part of the ribosomal stalk, playing a central role in the interaction of the ribosome with GTP-bound translation factors. The polypeptide is Large ribosomal subunit protein uL10 (Bartonella henselae (strain ATCC 49882 / DSM 28221 / CCUG 30454 / Houston 1) (Rochalimaea henselae)).